The sequence spans 293 residues: tRNA pseudouridine synthase B (293 aa).

Aspartate 40 (nucleophile) is an active-site residue.

This sequence belongs to the pseudouridine synthase TruB family. Type 1 subfamily.

The catalysed reaction is uridine(55) in tRNA = pseudouridine(55) in tRNA. Functionally, responsible for synthesis of pseudouridine from uracil-55 in the psi GC loop of transfer RNAs. This Rickettsia akari (strain Hartford) protein is tRNA pseudouridine synthase B.